Here is a 691-residue protein sequence, read N- to C-terminus: Calcium-binding and coiled-coil domain-containing protein 1 (691 aa).

The p300 KIX-binding stretch occupies residues 1 to 30; it reads MEESPLSRAPSRGGVNFLNVARTYIPNTKV. The segment at 1–190 is N-terminal AD (CTNNB1 binding site); sequence MEESPLSRAP…VQELERALAT (190 aa). Phosphoserine is present on serine 4. The tract at residues 45–125 is interaction with GATA1; the sequence is SDWIGIFKVE…FQFREPRPMD (81 aa). Coiled coils occupy residues 145 to 205, 232 to 339, and 417 to 514; these read KATV…YKGI, ELED…AELE, and QSVE…ADEK. Residues 501 to 691 form a C-terminal AD (CTNNB1 binding site); interaction with CCAR1 region; that stretch reads RKLEARLEKV…FSTQDPFTFE (191 aa). Positions 514-606 are disordered; sequence KWNEDATTED…SEAEDEKSVL (93 aa). A UBZ1-type zinc finger spans residues 653 to 679; the sequence is WKECPICKERFPAESDKDALEDHMDGH. Zn(2+)-binding residues include cysteine 656, cysteine 659, histidine 675, and histidine 679.

The protein belongs to the CALCOCO family. As to quaternary structure, part of a calphoglin complex consisting of CALCOCO1, PPA1 and PGM. Interacts with the bHLH-PAS domains of GRIP1, AHR and ARNT. Interacts with CTNNB1 via both its N- and C-terminal regions. Interacts with EP300. Interacts with CCAR1 (via N-terminus) and GATA1.

Its subcellular location is the cytoplasm. It is found in the nucleus. Its function is as follows. Functions as a coactivator for aryl hydrocarbon and nuclear receptors (NR). Recruited to promoters through its contact with the N-terminal basic helix-loop-helix-Per-Arnt-Sim (PAS) domain of transcription factors or coactivators, such as NCOA2. During ER-activation acts synergistically in combination with other NCOA2-binding proteins, such as EP300, CREBBP and CARM1. Involved in the transcriptional activation of target genes in the Wnt/CTNNB1 pathway. Functions as a secondary coactivator in LEF1-mediated transcriptional activation via its interaction with CTNNB1. Coactivator function for nuclear receptors and LEF1/CTNNB1 involves differential utilization of two different activation regions. In association with CCAR1 enhances GATA1- and MED1-mediated transcriptional activation from the gamma-globin promoter during erythroid differentiation of K562 erythroleukemia cells. Seems to enhance inorganic pyrophosphatase thus activating phosphogluomutase (PMG). Probably functions as a component of the calphoglin complex, which is involved in linking cellular metabolism (phosphate and glucose metabolism) with other core functions including protein synthesis and degradation, calcium signaling and cell growth. This chain is Calcium-binding and coiled-coil domain-containing protein 1 (CALCOCO1), found in Homo sapiens (Human).